The sequence spans 547 residues: DEAD-box ATP-dependent RNA helicase 31 (547 aa).

The span at 1 to 34 shows a compositional bias: acidic residues; sequence MFDFGLSEDDSELGEVDEDDGPSGFEDDLFDDEG. The interval 1–74 is disordered; the sequence is MFDFGLSEDD…HTRESGGGDS (74 aa). Basic and acidic residues predominate over residues 53–70; the sequence is IKGEPIDQEGVVHTRESG. The Q motif signature appears at 79-107; the sequence is TRFDECSLSPLTLKGVKAAGYERMTAVQE. The Helicase ATP-binding domain maps to 110 to 293; that stretch reads LPIILKGKDV…HIAMKRDLEF (184 aa). Residue 123-130 coordinates ATP; it reads AKTGTGKT. Residues 241–244 carry the DEAD box motif; it reads DEAD. The region spanning 327 to 478 is the Helicase C-terminal domain; that stretch reads LLTDHISENV…TKRKVEKALA (152 aa).

It belongs to the DEAD box helicase family.

The catalysed reaction is ATP + H2O = ADP + phosphate + H(+). This chain is DEAD-box ATP-dependent RNA helicase 31, found in Oryza sativa subsp. japonica (Rice).